The sequence spans 196 residues: dTTP/UTP pyrophosphatase (196 aa).

D72 (proton acceptor) is an active-site residue.

It belongs to the Maf family. YhdE subfamily. It depends on a divalent metal cation as a cofactor.

It is found in the cytoplasm. The catalysed reaction is dTTP + H2O = dTMP + diphosphate + H(+). The enzyme catalyses UTP + H2O = UMP + diphosphate + H(+). Functionally, nucleoside triphosphate pyrophosphatase that hydrolyzes dTTP and UTP. May have a dual role in cell division arrest and in preventing the incorporation of modified nucleotides into cellular nucleic acids. This Chlamydia trachomatis serovar L2 (strain ATCC VR-902B / DSM 19102 / 434/Bu) protein is dTTP/UTP pyrophosphatase.